Reading from the N-terminus, the 1452-residue chain is ABC multidrug transporter A-1 (1452 aa).

The interval 1 to 20 is disordered; it reads MNESHEAGKNSSTNVEEREE. N-linked (GlcNAc...) asparagine glycosylation is found at Asn-2, Asn-10, Asn-228, Asn-287, and Asn-311. An ABC transporter 1 domain is found at 110–363; it reads LKTLSLARIA…FLQMGFVCPD (254 aa). 6 helical membrane passes run 474–494, 508–528, 554–574, 583–603, 616–636, and 725–745; these read VTIS…SIFY, ALLF…MLTL, MIMD…VLYF, GAFF…SMFF, VLPF…FAIP, and IGVI…ATDF. The ABC transporter 2 domain maps to 802-1044; sequence FQWKDVCFDI…ILIDYFVRNG (243 aa). 838 to 845 is a binding site for ATP; that stretch reads GVSGAGKT. 6 consecutive transmembrane segments (helical) span residues 1153–1173, 1183–1203, 1223–1243, 1271–1291, 1297–1317, and 1324–1344; these read ALCV…PNTI, IFML…HFVA, FLIA…VLMF, LMIW…IAAF, AGNL…VLAT, and FWIF…MLSV. Asn-1350, Asn-1365, and Asn-1391 each carry an N-linked (GlcNAc...) asparagine glycan. A helical membrane pass occupies residues 1418–1438; sequence FGLMWVFIVFNIFAACSLYWW.

Belongs to the ABC transporter superfamily. ABCG family. PDR (TC 3.A.1.205) subfamily.

It is found in the membrane. ABC transporter that seems not to be involved in the efflux of toxic substances, at least not the classical compounds such as itraconazole, amphotericin B, voriconazole, posaconazole, ravuconazole, or echinocandins. The sequence is that of ABC multidrug transporter A-1 from Aspergillus fumigatus (strain ATCC MYA-4609 / CBS 101355 / FGSC A1100 / Af293) (Neosartorya fumigata).